Reading from the N-terminus, the 63-residue chain is Large ribosomal subunit protein uL30 (63 aa).

This sequence belongs to the universal ribosomal protein uL30 family. As to quaternary structure, part of the 50S ribosomal subunit.

In Rickettsia peacockii (strain Rustic), this protein is Large ribosomal subunit protein uL30.